The primary structure comprises 472 residues: Aspartyl/glutamyl-tRNA(Asn/Gln) amidotransferase subunit B (472 aa).

It belongs to the GatB/GatE family. GatB subfamily. Heterotrimer of A, B and C subunits.

It catalyses the reaction L-glutamyl-tRNA(Gln) + L-glutamine + ATP + H2O = L-glutaminyl-tRNA(Gln) + L-glutamate + ADP + phosphate + H(+). The enzyme catalyses L-aspartyl-tRNA(Asn) + L-glutamine + ATP + H2O = L-asparaginyl-tRNA(Asn) + L-glutamate + ADP + phosphate + 2 H(+). Allows the formation of correctly charged Asn-tRNA(Asn) or Gln-tRNA(Gln) through the transamidation of misacylated Asp-tRNA(Asn) or Glu-tRNA(Gln) in organisms which lack either or both of asparaginyl-tRNA or glutaminyl-tRNA synthetases. The reaction takes place in the presence of glutamine and ATP through an activated phospho-Asp-tRNA(Asn) or phospho-Glu-tRNA(Gln). This Campylobacter jejuni subsp. jejuni serotype O:6 (strain 81116 / NCTC 11828) protein is Aspartyl/glutamyl-tRNA(Asn/Gln) amidotransferase subunit B.